The sequence spans 279 residues: Urease accessory protein UreD (279 aa).

This sequence belongs to the UreD family. In terms of assembly, ureD, UreF and UreG form a complex that acts as a GTP-hydrolysis-dependent molecular chaperone, activating the urease apoprotein by helping to assemble the nickel containing metallocenter of UreC. The UreE protein probably delivers the nickel.

It localises to the cytoplasm. In terms of biological role, required for maturation of urease via the functional incorporation of the urease nickel metallocenter. The chain is Urease accessory protein UreD from Streptococcus thermophilus (strain ATCC BAA-250 / LMG 18311).